A 224-amino-acid polypeptide reads, in one-letter code: Cytidylate kinase (224 aa).

11 to 19 (GPAGAGKST) is a binding site for ATP.

This sequence belongs to the cytidylate kinase family. Type 1 subfamily.

It localises to the cytoplasm. The catalysed reaction is CMP + ATP = CDP + ADP. It carries out the reaction dCMP + ATP = dCDP + ADP. The protein is Cytidylate kinase of Exiguobacterium sp. (strain ATCC BAA-1283 / AT1b).